We begin with the raw amino-acid sequence, 62 residues long: Metallothionein-like protein 3A (62 aa).

The protein belongs to the metallothionein superfamily. Type 15 family.

Metallothioneins have a high content of cysteine residues that bind various heavy metals. The chain is Metallothionein-like protein 3A (MT3A) from Oryza sativa subsp. indica (Rice).